The primary structure comprises 226 residues: MAEEQQKAGHSNGENIIPPEEVAKFLPETVEEGGWEKCWEDGITPWDQGRATPLVVHLVDSSSLPLGRALVPGCGGGHDVVAMASPERFVVGLDISESALEKAAETYGSSPKAKYFTFVKEDFFTWRPNELFDLIFDYVVFCAIEPEMRPAWAKSMYELLKPDGELITLMYPITDHDGGPPYKVAVSTYEDVLVPVGFKAVSIEENPYSIATRKGKEKLGRWKKIN.

Tryptophan 35, tryptophan 39, tryptophan 46, and glycine 73 together coordinate S-adenosyl-L-methionine. Position 85 is a phosphoserine (serine 85). S-adenosyl-L-methionine contacts are provided by residues aspartate 94, aspartate 122 to phenylalanine 123, and tyrosine 138.

It belongs to the class I-like SAM-binding methyltransferase superfamily. TPMT family. As to expression, ubiquitous.

It catalyses the reaction thiocyanate + S-adenosyl-L-methionine = methyl thiocyanate + S-adenosyl-L-homocysteine. Its function is as follows. S-adenosyl-L-methionine-dependent methyltransferase. Probably involved in glucosinolate metabolism and defense against phytopathogens. Highly reactive to thiocyanate (NCS(-)) derived from myrosinase-mediated hydrolysis of glucosinolates upon tissue damage. Also accepts halid ions as substrates with a lower affinity. The protein is Thiocyanate methyltransferase 1 (TMT1) of Brassica oleracea (Wild cabbage).